Here is a 399-residue protein sequence, read N- to C-terminus: Cell division protein FtsZ (399 aa).

Residues 30–34 (GGGSN), 117–119 (GTG), glutamate 148, lysine 152, and aspartate 196 contribute to the GTP site. The interval 349–368 (TLMSGNQNAPSGSYEQQDSS) is disordered. A compositionally biased stretch (polar residues) spans 351 to 368 (MSGNQNAPSGSYEQQDSS).

This sequence belongs to the FtsZ family. As to quaternary structure, homodimer. Polymerizes to form a dynamic ring structure in a strictly GTP-dependent manner. Interacts directly with several other division proteins.

It localises to the cytoplasm. In terms of biological role, essential cell division protein that forms a contractile ring structure (Z ring) at the future cell division site. The regulation of the ring assembly controls the timing and the location of cell division. One of the functions of the FtsZ ring is to recruit other cell division proteins to the septum to produce a new cell wall between the dividing cells. Binds GTP and shows GTPase activity. The protein is Cell division protein FtsZ of Borreliella burgdorferi (strain ATCC 35210 / DSM 4680 / CIP 102532 / B31) (Borrelia burgdorferi).